Reading from the N-terminus, the 140-residue chain is Nucleoside diphosphate kinase (140 aa).

ATP is bound by residues Lys11, Phe59, Arg87, Thr93, Arg104, and Asn114. His117 functions as the Pros-phosphohistidine intermediate in the catalytic mechanism.

It belongs to the NDK family. Mg(2+) serves as cofactor.

It localises to the cytoplasm. The enzyme catalyses a 2'-deoxyribonucleoside 5'-diphosphate + ATP = a 2'-deoxyribonucleoside 5'-triphosphate + ADP. It catalyses the reaction a ribonucleoside 5'-diphosphate + ATP = a ribonucleoside 5'-triphosphate + ADP. Major role in the synthesis of nucleoside triphosphates other than ATP. The ATP gamma phosphate is transferred to the NDP beta phosphate via a ping-pong mechanism, using a phosphorylated active-site intermediate. The protein is Nucleoside diphosphate kinase of Metallosphaera sedula (strain ATCC 51363 / DSM 5348 / JCM 9185 / NBRC 15509 / TH2).